An 85-amino-acid chain; its full sequence is Acylphosphatase (85 aa).

Residues 3–85 (AARFVVSGVV…PARFRRLKTL (83 aa)) enclose the Acylphosphatase-like domain. Active-site residues include Arg-18 and Asn-36. Residues 66-85 (PPRSRRSRARPARFRRLKTL) are disordered.

It belongs to the acylphosphatase family.

It carries out the reaction an acyl phosphate + H2O = a carboxylate + phosphate + H(+). The polypeptide is Acylphosphatase (acyP) (Xanthomonas axonopodis pv. citri (strain 306)).